The following is a 194-amino-acid chain: MRPYFTLLLALAFILACTNLVEADAGRVLETTTNEHARHLRTAVASVVDLPDDEDERLLGYNTVQLWRMRRTANKLMNGKLTTQKEAALKKWMASQQDKFLAKWLKSSSVYPDQVYSKLGLTKLGASAKSSPNYQLYEKYTEALLQRWTNFKASPDTVYKSLRLDKLGAKAPQSPSYPMYEKYLQTFFRNQPAN.

An N-terminal signal peptide occupies residues Met1–Ala23. A RxLR-dEER motif is present at residues Arg38 to Arg57. Positions Leu58–Ser108 are host plasma membrane-binding.

It belongs to the RxLR effector family. As to quaternary structure, homodimer. Interacts with host soybean aspartic protease AP1.

The protein localises to the secreted. It localises to the host cell membrane. Its function is as follows. Effector that suppresses plant defense responses during the early stages of pathogen infection. Suppresses cell death induced by effectors and PAMPs in plant hosts. Avh240 dimerizes and localizes at the plasma membrane to interfere with aspartic protease AP1 secretion, which presents an effective mechanism by which effector proteins suppress plant apoplastic immunity. The sequence is that of RxLR effector protein Avh240 from Phytophthora sojae (Soybean stem and root rot agent).